Reading from the N-terminus, the 110-residue chain is Snake venom vascular endothelial growth factor toxin (110 aa).

Glutamine 1 is modified (pyrrolidone carboxylic acid). 3 disulfides stabilise this stretch: cysteine 14-cysteine 56, cysteine 45-cysteine 91, and cysteine 49-cysteine 93.

This sequence belongs to the PDGF/VEGF growth factor family. Snake venom VEGF subfamily. As to quaternary structure, homodimer; disulfide-linked. As to expression, expressed by the venom gland.

Its subcellular location is the secreted. Functionally, snake venom VEGFs that may contribute to venom dispersion and prey subjugation by inducing vascular permeability and hypotension. This protein potently stimulates dermal human microvascular endothelial cell (dHMVEC) proliferation in a VEGFR-2 dependent manner. This stimulatory effect is correlated with activation of the MAPK Erk1/2 signaling pathway. It also appears to be a chemoattractant for migration of these cells and stimulates their radial migration in a collagen gel. In vivo, it induces angiogenesis in a Japanese quail assay. This pro-angiogenic effect may also be related to its interaction with VEGFR-2. In addition, it may induce an increase in capillary permeability after intradermal injection, as well as a drastic hypotensive effect after intravenous injection. The hypotension is mediated by nitric oxide (NO), which is produced by VEGF-activated endothelium NO synthase. This Daboia palaestinae (Palestine viper) protein is Snake venom vascular endothelial growth factor toxin.